Reading from the N-terminus, the 106-residue chain is MDLIESIRALAALAFTLGLIGLAAWALRKYGPDSIGRAIAARQDRRLKVIESLALDPTRRLVVVSLDGEERLVLLGDGRLLDWTPKGPPPASALSPSPVAEPEPVV.

Residues 9 to 27 (ALAALAFTLGLIGLAAWAL) form a helical membrane-spanning segment. The interval 84–106 (TPKGPPPASALSPSPVAEPEPVV) is disordered.

It belongs to the FliO/MopB family.

The protein resides in the cell membrane. It localises to the bacterial flagellum basal body. This is an uncharacterized protein from Caulobacter vibrioides (strain ATCC 19089 / CIP 103742 / CB 15) (Caulobacter crescentus).